The chain runs to 232 residues: Membrane steroid-binding protein 1 (232 aa).

The helical transmembrane segment at 25–45 threads the bilayer; it reads AAFFTAVAAAAALYHVVSGIF. Disordered stretches follow at residues 48-77 and 172-232; these read PPPPPPPRPRDEPEAEPLPPPVQLGEVSEE and TVPV…AKES. One can recognise a Cytochrome b5 heme-binding domain in the interval 71 to 170; it reads LGEVSEEELR…GKYVKVGTVK (100 aa). The interval 73–170 is steroid-binding; that stretch reads EVSEEELRQY…GKYVKVGTVK (98 aa). Low complexity predominate over residues 179 to 193; that stretch reads APSTSPETTETAAAA. Basic and acidic residues predominate over residues 194–219; the sequence is EPEKAPATEEKPREVSSEEVKEKEDA.

This sequence belongs to the cytochrome b5 family. MAPR subfamily. Interacts with SERL2. Expressed in leaf sheaths, leaf blades and panicles.

It localises to the cell membrane. Functionally, binds multiple steroid compounds. May act as a coreceptor with SERL2 and enhance its endocytosis. The sequence is that of Membrane steroid-binding protein 1 from Oryza sativa subsp. japonica (Rice).